Reading from the N-terminus, the 178-residue chain is Fatty-acid and retinol-binding protein 1 (178 aa).

A signal peptide spans 1-16; it reads MYHRLILLALIGTTMA. Coiled-coil stretches lie at residues 67–89 and 130–153; these read DAAL…ELRN and KQAA…ELKV.

Belongs to the fatty-acid and retinol-binding protein (FARBP) family. Not glycosylated.

It is found in the secreted. Its function is as follows. Binds retinol and different fatty acids. This chain is Fatty-acid and retinol-binding protein 1, found in Wuchereria bancrofti.